The following is a 384-amino-acid chain: Dual-specificity RNA methyltransferase RlmN (384 aa).

Glutamate 105 (proton acceptor) is an active-site residue. The 240-residue stretch at 111–350 (EDDRATLCVS…TIVRKTRGDD (240 aa)) folds into the Radical SAM core domain. Residues cysteine 118 and cysteine 355 are joined by a disulfide bond. Cysteine 125, cysteine 129, and cysteine 132 together coordinate [4Fe-4S] cluster. Residues 179-180 (GE), serine 211, 233-235 (SLH), and asparagine 312 contribute to the S-adenosyl-L-methionine site. The S-methylcysteine intermediate role is filled by cysteine 355.

Belongs to the radical SAM superfamily. RlmN family. It depends on [4Fe-4S] cluster as a cofactor.

The protein resides in the cytoplasm. It carries out the reaction adenosine(2503) in 23S rRNA + 2 reduced [2Fe-2S]-[ferredoxin] + 2 S-adenosyl-L-methionine = 2-methyladenosine(2503) in 23S rRNA + 5'-deoxyadenosine + L-methionine + 2 oxidized [2Fe-2S]-[ferredoxin] + S-adenosyl-L-homocysteine. It catalyses the reaction adenosine(37) in tRNA + 2 reduced [2Fe-2S]-[ferredoxin] + 2 S-adenosyl-L-methionine = 2-methyladenosine(37) in tRNA + 5'-deoxyadenosine + L-methionine + 2 oxidized [2Fe-2S]-[ferredoxin] + S-adenosyl-L-homocysteine. In terms of biological role, specifically methylates position 2 of adenine 2503 in 23S rRNA and position 2 of adenine 37 in tRNAs. m2A2503 modification seems to play a crucial role in the proofreading step occurring at the peptidyl transferase center and thus would serve to optimize ribosomal fidelity. The sequence is that of Dual-specificity RNA methyltransferase RlmN from Escherichia coli O6:H1 (strain CFT073 / ATCC 700928 / UPEC).